The chain runs to 582 residues: DNA mismatch repair protein MutL (582 aa).

The protein belongs to the DNA mismatch repair MutL/HexB family.

Its function is as follows. This protein is involved in the repair of mismatches in DNA. It is required for dam-dependent methyl-directed DNA mismatch repair. May act as a 'molecular matchmaker', a protein that promotes the formation of a stable complex between two or more DNA-binding proteins in an ATP-dependent manner without itself being part of a final effector complex. This chain is DNA mismatch repair protein MutL, found in Acidiphilium cryptum (strain JF-5).